A 407-amino-acid chain; its full sequence is Tryptophan synthase beta chain (407 aa).

K98 is modified (N6-(pyridoxal phosphate)lysine).

It belongs to the TrpB family. In terms of assembly, tetramer of two alpha and two beta chains. The cofactor is pyridoxal 5'-phosphate.

It carries out the reaction (1S,2R)-1-C-(indol-3-yl)glycerol 3-phosphate + L-serine = D-glyceraldehyde 3-phosphate + L-tryptophan + H2O. Its pathway is amino-acid biosynthesis; L-tryptophan biosynthesis; L-tryptophan from chorismate: step 5/5. Functionally, the beta subunit is responsible for the synthesis of L-tryptophan from indole and L-serine. This chain is Tryptophan synthase beta chain, found in Bradyrhizobium sp. (strain BTAi1 / ATCC BAA-1182).